The chain runs to 389 residues: Stilbene synthase 3 (389 aa).

55–58 serves as a coordination point for substrate; it reads KFQR. C164 is an active-site residue. Substrate is bound by residues L267 and 305–307; that span reads GGR.

The protein belongs to the thiolase-like superfamily. Chalcone/stilbene synthases family. In terms of assembly, homodimer.

Its subcellular location is the cytoplasm. It carries out the reaction 4-coumaroyl-CoA + 3 malonyl-CoA + 3 H(+) = trans-resveratrol + 4 CO2 + 4 CoA. It functions in the pathway phytoalexin biosynthesis; 3,4',5-trihydroxystilbene biosynthesis; 3,4',5-trihydroxystilbene from trans-4-coumarate: step 2/2. This Arachis hypogaea (Peanut) protein is Stilbene synthase 3.